The primary structure comprises 230 residues: MAHFTLYSHAGGPNPWKVVLALKELNLSYEQIFYDFQKGEQKCKEHLALNPNGRVPTLVDHKNNDYTIWESDAILIYLADKYDTDRKISLSFDDPEYYKLIQYLFFQASGQGVIWGQAGWFNFFHHEPVVSAVTRYRNEIKRVLGVLEDILKDRDYLVANKYTIADLSFIPWNYNLGGLFGEGKFSFKEEVPQLDFEKEFPKAYAWNQRLLARPAVKATFEELAKAKEQH.

The GST N-terminal domain occupies 2-86 (AHFTLYSHAG…YLADKYDTDR (85 aa)). The 138-residue stretch at 93–230 (DDPEYYKLIQ…EELAKAKEQH (138 aa)) folds into the GST C-terminal domain.

It belongs to the GST superfamily.

It catalyses the reaction RX + glutathione = an S-substituted glutathione + a halide anion + H(+). Involved in the oxidative stress response and detoxification. The protein is Glutathione S-transferase 2 (gst2) of Schizosaccharomyces pombe (strain 972 / ATCC 24843) (Fission yeast).